We begin with the raw amino-acid sequence, 648 residues long: ATPase family AAA domain-containing protein 3B (648 aa).

2 disordered regions span residues 1-54 (MSWL…DPTG) and 111-134 (QAEE…QYQD). At serine 2 the chain carries N-acetylserine. At 2–246 (SWLFGVNKGP…FRAFVTDRDK (245 aa)) the chain is on the mitochondrial intermembrane side. Pro residues predominate over residues 17–26 (GPPPPLPPAQ). Basic and acidic residues-rich tracts occupy residues 32–48 (GGDR…DKWS) and 111–125 (QAEE…ETRQ). Positions 69-214 (RYAKEALNLA…DIIREQIRLK (146 aa)) form a coiled coil. The segment at residues 247-264 (VTATVAGLTLLAVGVYSA) is an intramembrane region (helical). At 265–648 (KNATAVTGRF…PFCPPGHPLL (384 aa)) the chain is on the mitochondrial intermembrane side. 352 to 359 (GPPGTGKT) serves as a coordination point for ATP. Lysine 427 and lysine 495 each carry N6-acetyllysine.

Belongs to the AAA ATPase family. Forms heterooligomers with ATAD3A. Interacts with components of the mitochondrial ribosome, including MRPL11 and MRPS18B, and with other proteins involved in mitochondrial RNA metabolism, possibly via interaction with ATAD3A. Interacts with GADD45GIP1. In terms of tissue distribution, tends to be down-regulated in differentiated cells and re-expressed in pluripotent stem cells or cancer cells (at protein level).

Its subcellular location is the mitochondrion inner membrane. Its function is as follows. May play a role in a mitochondrial network organization typical for stem cells, characterized by reduced mitochondrial metabolism, low mtDNA copies and fragmentated mitochondrial network. May act by suppressing ATAD3A function, interfering with ATAD3A interaction with matrix nucleoid complexes. This Homo sapiens (Human) protein is ATPase family AAA domain-containing protein 3B (ATAD3B).